The chain runs to 403 residues: Histidine--tRNA ligase (403 aa).

It belongs to the class-II aminoacyl-tRNA synthetase family. Homodimer.

It localises to the cytoplasm. The catalysed reaction is tRNA(His) + L-histidine + ATP = L-histidyl-tRNA(His) + AMP + diphosphate + H(+). This is Histidine--tRNA ligase from Sulfurimonas denitrificans (strain ATCC 33889 / DSM 1251) (Thiomicrospira denitrificans (strain ATCC 33889 / DSM 1251)).